We begin with the raw amino-acid sequence, 149 residues long: D-aminoacyl-tRNA deacylase (149 aa).

The Gly-cisPro motif, important for rejection of L-amino acids signature appears at 137–138; sequence GP.

It belongs to the DTD family. As to quaternary structure, homodimer.

The protein localises to the cytoplasm. It carries out the reaction glycyl-tRNA(Ala) + H2O = tRNA(Ala) + glycine + H(+). The enzyme catalyses a D-aminoacyl-tRNA + H2O = a tRNA + a D-alpha-amino acid + H(+). Its function is as follows. An aminoacyl-tRNA editing enzyme that deacylates mischarged D-aminoacyl-tRNAs. Also deacylates mischarged glycyl-tRNA(Ala), protecting cells against glycine mischarging by AlaRS. Acts via tRNA-based rather than protein-based catalysis; rejects L-amino acids rather than detecting D-amino acids in the active site. By recycling D-aminoacyl-tRNA to D-amino acids and free tRNA molecules, this enzyme counteracts the toxicity associated with the formation of D-aminoacyl-tRNA entities in vivo and helps enforce protein L-homochirality. In Anaeromyxobacter dehalogenans (strain 2CP-C), this protein is D-aminoacyl-tRNA deacylase.